We begin with the raw amino-acid sequence, 258 residues long: Hydroxyethylthiazole kinase (258 aa).

M37 lines the substrate pocket. Residues R112 and T158 each coordinate ATP. A185 contributes to the substrate binding site.

The protein belongs to the Thz kinase family. Requires Mg(2+) as cofactor.

It catalyses the reaction 5-(2-hydroxyethyl)-4-methylthiazole + ATP = 4-methyl-5-(2-phosphooxyethyl)-thiazole + ADP + H(+). It functions in the pathway cofactor biosynthesis; thiamine diphosphate biosynthesis; 4-methyl-5-(2-phosphoethyl)-thiazole from 5-(2-hydroxyethyl)-4-methylthiazole: step 1/1. In terms of biological role, catalyzes the phosphorylation of the hydroxyl group of 4-methyl-5-beta-hydroxyethylthiazole (THZ). The sequence is that of Hydroxyethylthiazole kinase from Rhizobium etli (strain CIAT 652).